Here is a 134-residue protein sequence, read N- to C-terminus: 6,7-dimethyl-8-ribityllumazine synthase (134 aa).

Residues Phe12, 44–46 (VFD), and 68–70 (SVI) each bind 5-amino-6-(D-ribitylamino)uracil. 73–74 (DT) contacts (2S)-2-hydroxy-3-oxobutyl phosphate. The Proton donor role is filled by His76. Position 101 (Leu101) interacts with 5-amino-6-(D-ribitylamino)uracil. Arg116 is a binding site for (2S)-2-hydroxy-3-oxobutyl phosphate.

Belongs to the DMRL synthase family.

It carries out the reaction (2S)-2-hydroxy-3-oxobutyl phosphate + 5-amino-6-(D-ribitylamino)uracil = 6,7-dimethyl-8-(1-D-ribityl)lumazine + phosphate + 2 H2O + H(+). It functions in the pathway cofactor biosynthesis; riboflavin biosynthesis; riboflavin from 2-hydroxy-3-oxobutyl phosphate and 5-amino-6-(D-ribitylamino)uracil: step 1/2. Its function is as follows. Catalyzes the formation of 6,7-dimethyl-8-ribityllumazine by condensation of 5-amino-6-(D-ribitylamino)uracil with 3,4-dihydroxy-2-butanone 4-phosphate. This is the penultimate step in the biosynthesis of riboflavin. The sequence is that of 6,7-dimethyl-8-ribityllumazine synthase from Methanosarcina barkeri (strain Fusaro / DSM 804).